Reading from the N-terminus, the 227-residue chain is Orotidine 5'-phosphate decarboxylase (227 aa).

Substrate is bound by residues aspartate 8, lysine 30, 59–68, threonine 118, arginine 178, glutamine 187, glycine 207, and arginine 208; that span reads DLKLYDIPYT. Lysine 61 (proton donor) is an active-site residue.

This sequence belongs to the OMP decarboxylase family. Type 1 subfamily. Homodimer.

The enzyme catalyses orotidine 5'-phosphate + H(+) = UMP + CO2. It participates in pyrimidine metabolism; UMP biosynthesis via de novo pathway; UMP from orotate: step 2/2. Its function is as follows. Catalyzes the decarboxylation of orotidine 5'-monophosphate (OMP) to uridine 5'-monophosphate (UMP). The protein is Orotidine 5'-phosphate decarboxylase of Helicobacter pylori (strain ATCC 700392 / 26695) (Campylobacter pylori).